Reading from the N-terminus, the 342-residue chain is Transmembrane protein 59-like (342 aa).

Positions 1–24 are cleaved as a signal peptide; the sequence is MAAVALMPPPLLLLLLLASPPAAS. Residue N97 is glycosylated (N-linked (GlcNAc...) asparagine). Residues 268–290 traverse the membrane as a helical segment; the sequence is WILACCLFLSVLVMLWLSCSTLV. Positions 340-342 match the Microbody targeting signal motif; sequence TKL.

It belongs to the TMEM59 family. In terms of tissue distribution, expressed preferentially at high level in the brain.

The protein localises to the golgi apparatus membrane. Modulates the O-glycosylation and complex N-glycosylation steps occurring during the Golgi maturation of APP. Inhibits APP transport to the cell surface and further shedding. In Homo sapiens (Human), this protein is Transmembrane protein 59-like (TMEM59L).